Here is a 252-residue protein sequence, read N- to C-terminus: Imidazole glycerol phosphate synthase subunit HisF (252 aa).

Active-site residues include Asp-11 and Asp-130.

This sequence belongs to the HisA/HisF family. As to quaternary structure, heterodimer of HisH and HisF.

It localises to the cytoplasm. It carries out the reaction 5-[(5-phospho-1-deoxy-D-ribulos-1-ylimino)methylamino]-1-(5-phospho-beta-D-ribosyl)imidazole-4-carboxamide + L-glutamine = D-erythro-1-(imidazol-4-yl)glycerol 3-phosphate + 5-amino-1-(5-phospho-beta-D-ribosyl)imidazole-4-carboxamide + L-glutamate + H(+). The protein operates within amino-acid biosynthesis; L-histidine biosynthesis; L-histidine from 5-phospho-alpha-D-ribose 1-diphosphate: step 5/9. Its function is as follows. IGPS catalyzes the conversion of PRFAR and glutamine to IGP, AICAR and glutamate. The HisF subunit catalyzes the cyclization activity that produces IGP and AICAR from PRFAR using the ammonia provided by the HisH subunit. The sequence is that of Imidazole glycerol phosphate synthase subunit HisF from Acinetobacter baumannii (strain AB307-0294).